The chain runs to 206 residues: Holliday junction branch migration complex subunit RuvA (206 aa).

The interval 1–64 is domain I; it reads MIGRLRGNLL…EDAQLLYGFN (64 aa). A domain II region spans residues 65–143; it reads TKKERALFRE…GWGAGDLFTP (79 aa). The segment at 144 to 157 is flexible linker; that stretch reads ADTTSMDDASDLIS. The interval 158–206 is domain III; that stretch reads SPQSAQDEAVSALISLGYKPVQASKMVSQVAKPDMTSESLIRESLKSMI.

The protein belongs to the RuvA family. Homotetramer. Forms an RuvA(8)-RuvB(12)-Holliday junction (HJ) complex. HJ DNA is sandwiched between 2 RuvA tetramers; dsDNA enters through RuvA and exits via RuvB. An RuvB hexamer assembles on each DNA strand where it exits the tetramer. Each RuvB hexamer is contacted by two RuvA subunits (via domain III) on 2 adjacent RuvB subunits; this complex drives branch migration. In the full resolvosome a probable DNA-RuvA(4)-RuvB(12)-RuvC(2) complex forms which resolves the HJ.

It is found in the cytoplasm. The RuvA-RuvB-RuvC complex processes Holliday junction (HJ) DNA during genetic recombination and DNA repair, while the RuvA-RuvB complex plays an important role in the rescue of blocked DNA replication forks via replication fork reversal (RFR). RuvA specifically binds to HJ cruciform DNA, conferring on it an open structure. The RuvB hexamer acts as an ATP-dependent pump, pulling dsDNA into and through the RuvAB complex. HJ branch migration allows RuvC to scan DNA until it finds its consensus sequence, where it cleaves and resolves the cruciform DNA. The chain is Holliday junction branch migration complex subunit RuvA from Aliivibrio salmonicida (strain LFI1238) (Vibrio salmonicida (strain LFI1238)).